Here is a 114-residue protein sequence, read N- to C-terminus: T cell receptor beta variable 6-2 (114 aa).

Residues 1-21 form the signal peptide; it reads MSLGLLCCGAFSLLWAGPVNA. In terms of domain architecture, Ig-like spans 22–114; it reads GVTQTPKFRV…TSVYFCASSY (93 aa). Residues cysteine 42 and cysteine 110 are joined by a disulfide bond. An N-linked (GlcNAc...) asparagine glycan is attached at asparagine 84.

Alpha-beta TR is a heterodimer composed of an alpha and beta chain; disulfide-linked. The alpha-beta TR is associated with the transmembrane signaling CD3 coreceptor proteins to form the TR-CD3 (TcR or TCR). The assembly of alpha-beta TR heterodimers with CD3 occurs in the endoplasmic reticulum where a single alpha-beta TR heterodimer associates with one CD3D-CD3E heterodimer, one CD3G-CD3E heterodimer and one CD247 homodimer forming a stable octameric structure. CD3D-CD3E and CD3G-CD3E heterodimers preferentially associate with TR alpha and TR beta chains, respectively. The association of the CD247 homodimer is the last step of TcR assembly in the endoplasmic reticulum and is required for transport to the cell surface.

It localises to the cell membrane. Its function is as follows. V region of the variable domain of T cell receptor (TR) beta chain that participates in the antigen recognition. Alpha-beta T cell receptors are antigen specific receptors which are essential to the immune response and are present on the cell surface of T lymphocytes. Recognize peptide-major histocompatibility (MH) (pMH) complexes that are displayed by antigen presenting cells (APC), a prerequisite for efficient T cell adaptive immunity against pathogens. Binding of alpha-beta TR to pMH complex initiates TR-CD3 clustering on the cell surface and intracellular activation of LCK that phosphorylates the ITAM motifs of CD3G, CD3D, CD3E and CD247 enabling the recruitment of ZAP70. In turn ZAP70 phosphorylates LAT, which recruits numerous signaling molecules to form the LAT signalosome. The LAT signalosome propagates signal branching to three major signaling pathways, the calcium, the mitogen-activated protein kinase (MAPK) kinase and the nuclear factor NF-kappa-B (NF-kB) pathways, leading to the mobilization of transcription factors that are critical for gene expression and essential for T cell growth and differentiation. The T cell repertoire is generated in the thymus, by V-(D)-J rearrangement. This repertoire is then shaped by intrathymic selection events to generate a peripheral T cell pool of self-MH restricted, non-autoaggressive T cells. Post-thymic interaction of alpha-beta TR with the pMH complexes shapes TR structural and functional avidity. This chain is T cell receptor beta variable 6-2, found in Homo sapiens (Human).